A 256-amino-acid polypeptide reads, in one-letter code: MQSRLSWIFNPKTGKTVMLAFDHGYFQGPTTGLERIDINIAPLFEHADVLMCTRGILRSVVPPATNKPGVLRASGANSILAELSNEAVALSMDDAVRLNSCAVAAQVYIGSEYEHQSIKNIIQLVDAGMKVGMPTMAVTGVGKDMVRDQRYFSLATRIAAEMGAQIIKTYYVEKGFERIVAGCPVPIVIAGGKKLPERETLEMCWQAIDQGASGVDMGRNIFQSDHPVAMMKAVQAVVHHNETADRAYELYLSEKQ.

The Schiff-base intermediate with substrate role is filled by Lys168.

It belongs to the DeoC/FbaB aldolase family. As to quaternary structure, homodecamer.

The protein localises to the cytoplasm. The catalysed reaction is dihydroxyacetone phosphate + acetyl-CoA = 3-hydroxy-2,4-dioxopentyl phosphate + CoA. In terms of biological role, involved in the degradation of phospho-AI-2, thereby terminating induction of the lsr operon and closing the AI-2 signaling cycle. Catalyzes the transfer of an acetyl moiety from 3-hydroxy-5-phosphonooxypentane-2,4-dione to CoA to form glycerone phosphate and acetyl-CoA. The polypeptide is 3-hydroxy-5-phosphonooxypentane-2,4-dione thiolase (lsrF) (Shigella flexneri serotype 5b (strain 8401)).